Here is a 208-residue protein sequence, read N- to C-terminus: Uracil phosphoribosyltransferase (208 aa).

Residues Arg78, Arg103, and 130–138 contribute to the 5-phospho-alpha-D-ribose 1-diphosphate site; that span reads DPMLATGGS. Residues Ile193 and 198–200 each bind uracil; that span reads GDA. Asp199 lines the 5-phospho-alpha-D-ribose 1-diphosphate pocket.

It belongs to the UPRTase family. Mg(2+) is required as a cofactor.

The catalysed reaction is UMP + diphosphate = 5-phospho-alpha-D-ribose 1-diphosphate + uracil. Its pathway is pyrimidine metabolism; UMP biosynthesis via salvage pathway; UMP from uracil: step 1/1. Its activity is regulated as follows. Allosterically activated by GTP. Catalyzes the conversion of uracil and 5-phospho-alpha-D-ribose 1-diphosphate (PRPP) to UMP and diphosphate. The chain is Uracil phosphoribosyltransferase from Shewanella woodyi (strain ATCC 51908 / MS32).